Consider the following 446-residue polypeptide: Zinc finger protein 19 (446 aa).

Residues 2 to 73 form the KRAB domain; it reads VTFEDVAVHF…EAQDDPPAET (72 aa). 9 consecutive C2H2-type zinc fingers follow at residues 149-171, 177-199, 205-227, 233-255, 261-283, 289-311, 317-339, 345-367, and 373-395; these read FICE…QRIH, FECS…QRIH, YQCE…QRIH, YYCT…QRIH, YECN…QKIH, YECN…QRIH, YSCK…QRIH, FDCV…LRIH, and YVCD…QRIH. The C2H2-type 10; degenerate zinc-finger motif lies at 401 to 423; it reads YEYSKYEKAFGTSSQLGHLEHVH.

The protein belongs to the krueppel C2H2-type zinc-finger protein family.

Its subcellular location is the nucleus. In terms of biological role, may be involved in transcriptional regulation. The chain is Zinc finger protein 19 (ZNF19) from Pongo abelii (Sumatran orangutan).